Consider the following 262-residue polypeptide: Cutinase 2 (262 aa).

Residue Y61 coordinates poly(ethylene terephthalate). Catalysis depends on S131, which acts as the Nucleophile. 2 residues coordinate poly(ethylene terephthalate): M132 and W156. Active-site charge relay system residues include D177 and H209. C242 and C260 are joined by a disulfide.

It belongs to the AB hydrolase superfamily.

It is found in the secreted. Its subcellular location is the periplasm. It catalyses the reaction a butanoate ester + H2O = an aliphatic alcohol + butanoate + H(+). It carries out the reaction an acetyl ester + H2O = an aliphatic alcohol + acetate + H(+). The catalysed reaction is (ethylene terephthalate)(n) + H2O = (ethylene terephthalate)(n-1) + 4-[(2-hydroxyethoxy)carbonyl]benzoate + H(+). The enzyme catalyses cutin + H2O = cutin monomers.. Its function is as follows. Catalyzes the hydrolysis of cutin, a polyester that forms the structure of plant cuticle. Shows esterase activity towards p-nitrophenol-linked aliphatic esters (pNP-aliphatic esters). Capable of degrading the plastic poly(ethylene terephthalate) (PET), the most abundant polyester plastic in the world. Capable of degrading the bioplastic poly(lactic acid) (PLLA). This Thermobifida cellulosilytica protein is Cutinase 2.